Here is a 299-residue protein sequence, read N- to C-terminus: 4-diphosphocytidyl-2-C-methyl-D-erythritol kinase (299 aa).

Lys17 is an active-site residue. Residue 103–113 participates in ATP binding; the sequence is PVASGIGGGSG. The active site involves Asp145.

It belongs to the GHMP kinase family. IspE subfamily.

It carries out the reaction 4-CDP-2-C-methyl-D-erythritol + ATP = 4-CDP-2-C-methyl-D-erythritol 2-phosphate + ADP + H(+). Its pathway is isoprenoid biosynthesis; isopentenyl diphosphate biosynthesis via DXP pathway; isopentenyl diphosphate from 1-deoxy-D-xylulose 5-phosphate: step 3/6. Catalyzes the phosphorylation of the position 2 hydroxy group of 4-diphosphocytidyl-2C-methyl-D-erythritol. This chain is 4-diphosphocytidyl-2-C-methyl-D-erythritol kinase, found in Bartonella tribocorum (strain CIP 105476 / IBS 506).